Here is a 180-residue protein sequence, read N- to C-terminus: Acireductone dioxygenase (180 aa).

Histidine 96, histidine 98, glutamate 102, and histidine 140 together coordinate Fe(2+). 4 residues coordinate Ni(2+): histidine 96, histidine 98, glutamate 102, and histidine 140.

The protein belongs to the acireductone dioxygenase (ARD) family. Monomer. Fe(2+) serves as cofactor. The cofactor is Ni(2+).

The catalysed reaction is 1,2-dihydroxy-5-(methylsulfanyl)pent-1-en-3-one + O2 = 3-(methylsulfanyl)propanoate + CO + formate + 2 H(+). It catalyses the reaction 1,2-dihydroxy-5-(methylsulfanyl)pent-1-en-3-one + O2 = 4-methylsulfanyl-2-oxobutanoate + formate + 2 H(+). Its pathway is amino-acid biosynthesis; L-methionine biosynthesis via salvage pathway; L-methionine from S-methyl-5-thio-alpha-D-ribose 1-phosphate: step 5/6. In terms of biological role, catalyzes 2 different reactions between oxygen and the acireductone 1,2-dihydroxy-3-keto-5-methylthiopentene (DHK-MTPene) depending upon the metal bound in the active site. Fe-containing acireductone dioxygenase (Fe-ARD) produces formate and 2-keto-4-methylthiobutyrate (KMTB), the alpha-ketoacid precursor of methionine in the methionine recycle pathway. Ni-containing acireductone dioxygenase (Ni-ARD) produces methylthiopropionate, carbon monoxide and formate, and does not lie on the methionine recycle pathway. The chain is Acireductone dioxygenase from Synechococcus sp. (strain WH7803).